A 937-amino-acid polypeptide reads, in one-letter code: Aconitate hydratase A (937 aa).

The segment at 410-450 (MANEGGFQPGSTSDLDNYNASWPGEGESAAANAEGRPSNPV) is disordered. Polar residues predominate over residues 418–429 (PGSTSDLDNYNA). A compositionally biased stretch (low complexity) spans 433 to 444 (GEGESAAANAEG). Cys475, Cys541, and Cys544 together coordinate [4Fe-4S] cluster.

Belongs to the aconitase/IPM isomerase family. Monomer. [4Fe-4S] cluster serves as cofactor.

The enzyme catalyses citrate = D-threo-isocitrate. The catalysed reaction is (2S,3R)-3-hydroxybutane-1,2,3-tricarboxylate = 2-methyl-cis-aconitate + H2O. The protein operates within carbohydrate metabolism; tricarboxylic acid cycle; isocitrate from oxaloacetate: step 2/2. Its pathway is organic acid metabolism; propanoate degradation. Its function is as follows. Involved in the catabolism of short chain fatty acids (SCFA) via the tricarboxylic acid (TCA)(acetyl degradation route) and probably via the 2-methylcitrate cycle I (propionate degradation route). Catalyzes the reversible isomerization of citrate to isocitrate via cis-aconitate. Could catalyze the hydration of 2-methyl-cis-aconitate to yield (2R,3S)-2-methylisocitrate. The apo form of AcnA functions as a RNA-binding regulatory protein. In Corynebacterium efficiens (strain DSM 44549 / YS-314 / AJ 12310 / JCM 11189 / NBRC 100395), this protein is Aconitate hydratase A (acn).